Here is a 119-residue protein sequence, read N- to C-terminus: Large ribosomal subunit protein bL20 (119 aa).

The protein belongs to the bacterial ribosomal protein bL20 family.

Binds directly to 23S ribosomal RNA and is necessary for the in vitro assembly process of the 50S ribosomal subunit. It is not involved in the protein synthesizing functions of that subunit. The sequence is that of Large ribosomal subunit protein bL20 from Latilactobacillus sakei subsp. sakei (strain 23K) (Lactobacillus sakei subsp. sakei).